Reading from the N-terminus, the 65-residue chain is Large ribosomal subunit protein bL31 (65 aa).

The Zn(2+) site is built by cysteine 16, cysteine 18, cysteine 36, and cysteine 39.

Belongs to the bacterial ribosomal protein bL31 family. Type A subfamily. Part of the 50S ribosomal subunit. Requires Zn(2+) as cofactor.

Its function is as follows. Binds the 23S rRNA. This chain is Large ribosomal subunit protein bL31, found in Desulfitobacterium hafniense (strain DSM 10664 / DCB-2).